We begin with the raw amino-acid sequence, 370 residues long: Doublesex- and mab-3-related transcription factor C2 (370 aa).

The interval 1 to 38 (MDPSETAALHHCSADSSPADEARVPQSTELIPRRPVSR) is disordered. Positions 42–89 (CARCRNHGVTAHLKGHKRLCLFQACECHKCVLILERRRVMAAQVALRR) form a DNA-binding region, DM. The interval 334-356 (APPGGRGFQPVGPPLRPSPGSSV) is disordered.

This sequence belongs to the DMRT family. Expressed in testis. Highly expressed in ovary.

The protein localises to the nucleus. In terms of biological role, may be involved in sexual development. In Mus musculus (Mouse), this protein is Doublesex- and mab-3-related transcription factor C2 (Dmrtc2).